A 170-amino-acid polypeptide reads, in one-letter code: Large ribosomal subunit protein uL11 (170 aa).

Belongs to the universal ribosomal protein uL11 family. In terms of assembly, part of the ribosomal stalk of the 50S ribosomal subunit. Interacts with L10 and the large rRNA to form the base of the stalk. L10 forms an elongated spine to which L12 dimers bind in a sequential fashion forming a multimeric L10(L12)X complex.

Its function is as follows. Forms part of the ribosomal stalk which helps the ribosome interact with GTP-bound translation factors. This is Large ribosomal subunit protein uL11 from Sulfolobus acidocaldarius (strain ATCC 33909 / DSM 639 / JCM 8929 / NBRC 15157 / NCIMB 11770).